Here is a 287-residue protein sequence, read N- to C-terminus: Undecaprenyl-diphosphatase (287 aa).

Helical transmembrane passes span Leu-6–Val-26, Ser-45–Phe-65, Asn-89–Lys-109, Val-111–Trp-131, Ala-204–Leu-224, Ala-238–Leu-258, and Tyr-266–Ala-286.

This sequence belongs to the UppP family.

It is found in the cell inner membrane. It catalyses the reaction di-trans,octa-cis-undecaprenyl diphosphate + H2O = di-trans,octa-cis-undecaprenyl phosphate + phosphate + H(+). Its function is as follows. Catalyzes the dephosphorylation of undecaprenyl diphosphate (UPP). Confers resistance to bacitracin. This chain is Undecaprenyl-diphosphatase, found in Bordetella pertussis (strain Tohama I / ATCC BAA-589 / NCTC 13251).